The primary structure comprises 406 residues: MAAAVRQDLAQLMNSSGSHKDLAGKYRQILEKAIQLSGAEQLEALKAFVEAMVNENVSLVISRQLLTDFCTHLPNLPDSTAKEIYHFTLEKIQPRVISFEEQVASVRQHLASIYEKEEDWRNAAQVLVGIPLETGQKQYNVDYKLETYLKIARLYLEDDDPVQAEAYINRASLLQNESTNEQLQIHYKVCYARVLDYRRKFIEAAQRYNELSYKTIVHESERLEALKHALHCTILASAGQQRSRMLATLFKDERCQQLAAYGILEKMYLDRIIRGNQLQEFAAMLMPHQKATTADGSSILDRAVIEHNLLSASKLYNNITFEELGALLEIPAAKAEKIASQMITEGRMNGFIDQIDGIVHFETREALPTWDKQIQSLCFQVNNLLEKISQTAPEWTAQAMEAQMAQ.

Position 2 is an N-acetylalanine (Ala-2). Lys-25 carries the N6-acetyllysine modification. One can recognise a PCI domain in the interval 197-366 (YRRKFIEAAQ…GIVHFETREA (170 aa)).

The protein belongs to the CSN4 family. As to quaternary structure, component of the CSN complex, composed of COPS1/GPS1, COPS2, COPS3, COPS4, COPS5, COPS6, COPS7 (COPS7A or COPS7B), COPS8 and COPS9. In the complex, it probably interacts directly with COPS1, COPS2, COPS3, COPS5, COPS6, COPS7 (COPS7A or COPS7B) and COPS8. Interacts with TOR1A; the interaction is direct and associates TOR1A and SNAPIN with the CSN complex. Interacts with STON2; controls STON2 neddylation levels. Interacts with ERCC6.

The protein localises to the cytoplasm. Its subcellular location is the nucleus. It localises to the cytoplasmic vesicle. The protein resides in the secretory vesicle. It is found in the synaptic vesicle. Functionally, component of the COP9 signalosome complex (CSN), a complex involved in various cellular and developmental processes. The CSN complex is an essential regulator of the ubiquitin (Ubl) conjugation pathway by mediating the deneddylation of the cullin subunits of SCF-type E3 ligase complexes, leading to decrease the Ubl ligase activity of SCF-type complexes such as SCF, CSA or DDB2. Also involved in the deneddylation of non-cullin subunits such as STON2. The complex is also involved in phosphorylation of p53/TP53, c-jun/JUN, IkappaBalpha/NFKBIA, ITPK1, IRF8/ICSBP and SNAPIN, possibly via its association with CK2 and PKD kinases. CSN-dependent phosphorylation of TP53 and JUN promotes and protects degradation by the Ubl system, respectively. This Pongo abelii (Sumatran orangutan) protein is COP9 signalosome complex subunit 4 (COPS4).